We begin with the raw amino-acid sequence, 360 residues long: Peptide chain release factor 1 (360 aa).

Residue Q235 is modified to N5-methylglutamine.

The protein belongs to the prokaryotic/mitochondrial release factor family. In terms of processing, methylated by PrmC. Methylation increases the termination efficiency of RF1.

It localises to the cytoplasm. Its function is as follows. Peptide chain release factor 1 directs the termination of translation in response to the peptide chain termination codons UAG and UAA. The polypeptide is Peptide chain release factor 1 (Methylobacillus flagellatus (strain ATCC 51484 / DSM 6875 / VKM B-1610 / KT)).